Reading from the N-terminus, the 289-residue chain is MQGVYPAIVTPFKDGSVDFEGLRKNIDFLIENGVKGVVPVGTTGESPTLTPKEHEKVIEKVVDFVNGRVEVIAGTGSNSTLEALEFSQYAEDVGADRVLLITPYYNKPPQEGLKRHFGEVANSITVPIVLYNVPSRTALNIEPDTIKYLFDEYSNITAIKEANPNLSQVSEILDICNIDVLSGNDELTLPIMSLGGKGVISVIANIAPKEFVQMVEFAEKGKFDKAKEIHYKLFPLMKLMFIETNPIPIKTAMNMLGMPSGELRLPLCEMAQSNKLKLQNALNTLGLLK.

Thr-43 contacts pyruvate. Tyr-131 serves as the catalytic Proton donor/acceptor. Lys-160 (schiff-base intermediate with substrate) is an active-site residue. Residue Ile-200 coordinates pyruvate.

Belongs to the DapA family. In terms of assembly, homotetramer; dimer of dimers.

Its subcellular location is the cytoplasm. The enzyme catalyses L-aspartate 4-semialdehyde + pyruvate = (2S,4S)-4-hydroxy-2,3,4,5-tetrahydrodipicolinate + H2O + H(+). Its pathway is amino-acid biosynthesis; L-lysine biosynthesis via DAP pathway; (S)-tetrahydrodipicolinate from L-aspartate: step 3/4. Its function is as follows. Catalyzes the condensation of (S)-aspartate-beta-semialdehyde [(S)-ASA] and pyruvate to 4-hydroxy-tetrahydrodipicolinate (HTPA). This is 4-hydroxy-tetrahydrodipicolinate synthase from Methanococcus vannielii (strain ATCC 35089 / DSM 1224 / JCM 13029 / OCM 148 / SB).